The chain runs to 328 residues: DNA-directed RNA polymerase subunit alpha (328 aa).

The segment at 1 to 232 is alpha N-terminal domain (alpha-NTD); the sequence is MSTQGFLKPR…DQISVFAALE (232 aa). Residues 248-328 are alpha C-terminal domain (alpha-CTD); sequence IDPVLLRPVD…NWPPLGLERP (81 aa).

It belongs to the RNA polymerase alpha chain family. As to quaternary structure, homodimer. The RNAP catalytic core consists of 2 alpha, 1 beta, 1 beta' and 1 omega subunit. When a sigma factor is associated with the core the holoenzyme is formed, which can initiate transcription.

It carries out the reaction RNA(n) + a ribonucleoside 5'-triphosphate = RNA(n+1) + diphosphate. Its function is as follows. DNA-dependent RNA polymerase catalyzes the transcription of DNA into RNA using the four ribonucleoside triphosphates as substrates. This is DNA-directed RNA polymerase subunit alpha from Bordetella bronchiseptica (strain ATCC BAA-588 / NCTC 13252 / RB50) (Alcaligenes bronchisepticus).